Reading from the N-terminus, the 227-residue chain is Thymidine kinase 1 (227 aa).

ATP is bound by residues 15–22 (GPMFSGKT), 47–49 (DTR), and 91–94 (DEGQ). Glu-92 (proton acceptor) is an active-site residue. Phe-122 provides a ligand contact to substrate. Zn(2+)-binding residues include Cys-147 and Cys-150. Residues 166-170 (IELIG) and Tyr-175 each bind substrate. The Zn(2+) site is built by Cys-179 and Cys-182. Residues 187–196 (QNEGNSTKPS) show a composition bias toward polar residues. The segment at 187-227 (QNEGNSTKPSKTARHSHSQSAPSVAPLAVNINPDDHLNNDY) is disordered.

It belongs to the thymidine kinase family. Interacts with calmodulin in the presence of Ca(2+).

It carries out the reaction thymidine + ATP = dTMP + ADP + H(+). The sequence is that of Thymidine kinase 1 from Dictyostelium discoideum (Social amoeba).